A 544-amino-acid chain; its full sequence is Cytochrome P450 monooxygenase notG' (544 aa).

The first 22 residues, 1-22, serve as a signal peptide directing secretion; that stretch reads MELPFSAMSLLYLLVGIAGVIS. The next 2 helical transmembrane spans lie at 42–62 and 66–86; these read WYTL…GLPL and AKAT…SLLL. 2 N-linked (GlcNAc...) asparagine glycosylation sites follow: Asn-226 and Asn-404. Cys-487 serves as a coordination point for heme.

The protein belongs to the cytochrome P450 family. It depends on heme as a cofactor.

Its subcellular location is the membrane. Its pathway is alkaloid biosynthesis. Functionally, cytochrome P450 monooxygenase; part of the gene cluster that mediates the biosynthesis of notoamide, a fungal indole alkaloid that belongs to a family of natural products containing a characteristic bicyclo[2.2.2]diazaoctane core. The first step of notoamide biosynthesis involves coupling of L-proline and L-tryptophan by the bimodular NRPS notE', to produce cyclo-L-tryptophan-L-proline called brevianamide F. The reverse prenyltransferase notF' then acts as a deoxybrevianamide E synthase and converts brevianamide F to deoxybrevianamide E via reverse prenylation at C-2 of the indole ring leading to the bicyclo[2.2.2]diazaoctane core. Deoxybrevianamide E is further hydroxylated at C-6 of the indole ring, likely catalyzed by the cytochrome P450 monooxygenase notG', to yield 6-hydroxy-deoxybrevianamide E. 6-hydroxy-deoxybrevianamide E is a specific substrate of the prenyltransferase notC' for normal prenylation at C-7 to produce 6-hydroxy-7-prenyl-deoxybrevianamide, also called notoamide S. As the proposed pivotal branching point in notoamide biosynthesis, notoamide S can be diverted to notoamide E through an oxidative pyran ring closure putatively catalyzed by either notH' cytochrome P450 monooxygenase or the notD' FAD-linked oxidoreductase. This step would be followed by an indole 2,3-epoxidation-initiated pinacol-like rearrangement catalyzed by the notB' FAD-dependent monooxygenase leading to the formation of notoamide C and notoamide D. On the other hand notoamide S is converted to notoamide T by notH' (or notD'), a bifunctional oxidase that also functions as the intramolecular Diels-Alderase responsible for generation of (-)-notoamide T. To generate antipodal (+)-notoaminide T, notH (or notD) in Aspergillus strain MF297-2 is expected to catalyze a Diels-Alder reaction leading to the opposite stereochemistry. The remaining oxidoreductase notD' (or notH') likely catalyzes the oxidative pyran ring formation to yield (-)-stephacidin A. The FAD-dependent monooxygenase notI' is highly similar to notB' and is predicted to catalyze a similar conversion from (-)-stephacidin A to (+)-notoamide B via the 2,3-epoxidation of (-)-stephacidin A followed by a pinacol-type rearrangement. Finally, it remains unclear which enzyme could be responsible for the final hydroxylation steps leading to notoamide A and sclerotiamide. In Aspergillus versicolor, this protein is Cytochrome P450 monooxygenase notG'.